Consider the following 154-residue polypeptide: Superoxide dismutase [Cu-Zn] (154 aa).

Residues His-47, His-49, and His-64 each coordinate Cu cation. The cysteines at positions 58 and 147 are disulfide-linked. Zn(2+) is bound by residues His-64, His-72, His-81, and Asp-84. A Cu cation-binding site is contributed by His-121. A substrate-binding site is contributed by Arg-144.

It belongs to the Cu-Zn superoxide dismutase family. As to quaternary structure, homodimer. The cofactor is Cu cation. Requires Zn(2+) as cofactor.

The protein localises to the cytoplasm. The enzyme catalyses 2 superoxide + 2 H(+) = H2O2 + O2. In terms of biological role, destroys radicals which are normally produced within the cells and which are toxic to biological systems. This chain is Superoxide dismutase [Cu-Zn] (SOD1), found in Podospora anserina (Pleurage anserina).